We begin with the raw amino-acid sequence, 158 residues long: Low molecular weight phosphotyrosine protein phosphatase (158 aa).

Position 2 is an N-acetylalanine (Ala2). Residue Cys13 is the Nucleophile of the active site. Residue Arg19 is part of the active site. The active-site Proton donor is Asp130. A phosphotyrosine mark is found at Tyr132 and Tyr133.

It belongs to the low molecular weight phosphotyrosine protein phosphatase family. As to quaternary structure, interacts with EPHA2; dephosphorylates EPHA2. Interacts with EPHB1. Interacts with the SH3 domain of SPTAN1. Post-translationally, phosphorylated by LCK. Phosphorylation at Tyr-132 increases its phosphatase activity.

The protein resides in the cytoplasm. The enzyme catalyses O-phospho-L-tyrosyl-[protein] + H2O = L-tyrosyl-[protein] + phosphate. It carries out the reaction a phosphate monoester + H2O = an alcohol + phosphate. With respect to regulation, inhibited by sulfhydryl reagents. Acts on tyrosine phosphorylated proteins, low-MW aryl phosphates and natural and synthetic acyl phosphates with differences in substrate specificity between isoform 1 and isoform 2. The polypeptide is Low molecular weight phosphotyrosine protein phosphatase (ACP1) (Pongo abelii (Sumatran orangutan)).